The primary structure comprises 419 residues: UDP-N-acetylglucosamine 1-carboxyvinyltransferase (419 aa).

22 to 23 (KN) serves as a coordination point for phosphoenolpyruvate. R91 lines the UDP-N-acetyl-alpha-D-glucosamine pocket. C115 serves as the catalytic Proton donor. C115 bears the 2-(S-cysteinyl)pyruvic acid O-phosphothioketal mark. UDP-N-acetyl-alpha-D-glucosamine contacts are provided by residues 120–124 (RPVDL), 160–163 (KVSV), D305, and I327.

This sequence belongs to the EPSP synthase family. MurA subfamily.

It is found in the cytoplasm. The enzyme catalyses phosphoenolpyruvate + UDP-N-acetyl-alpha-D-glucosamine = UDP-N-acetyl-3-O-(1-carboxyvinyl)-alpha-D-glucosamine + phosphate. It functions in the pathway cell wall biogenesis; peptidoglycan biosynthesis. Cell wall formation. Adds enolpyruvyl to UDP-N-acetylglucosamine. In Klebsiella pneumoniae (strain 342), this protein is UDP-N-acetylglucosamine 1-carboxyvinyltransferase.